We begin with the raw amino-acid sequence, 532 residues long: MAKFIFVTGGVVSGLGKGITASSIGALLKASGLKVFMQKFDPYLNVDPGTMSPYQHGEVFVTKDGGETDLDLGHYERFIDEELTKLSSTTSGKIYLSVIKGERKGDTSGKTIQVVPHITDAIKNKVYQAAKQSQADVIISEIGGTVGDIESQPFIEAIRQIRLEQGKENVMFVHVVLLLWLAASKEYKTKPIQNSVKAMASLGIQPDVIVCRSDSSSPKDIKEKISLFCNVPITNIIDAIDQDSIYRVPLALAKQNLQDIIIEQLQLKANAIDLTSWKQFNKKIDSSSQEIEISFVGKYIELQDAYLSVLESLKIAGWEFNKKIKIRWIQAETLNESNYNEILKNSQGILVPGGFGKRGIEGMMLASRYARDNDIPYLGICLGMQIATISIARDLLNWTDADSTEFNKNTTHPIFDYIKGIDRDNIGGTLRLGTMVTKLEKDSLVSKLYNSDVALERHRHRYEFNNKYKKDLESVGLRFSGIYEEKNLVEVIEMPSLKFFVASQFHPEFTSRPNKPTPLFKGFIKAIIENNK.

The segment at 1–267 (MAKFIFVTGG…QDIIIEQLQL (267 aa)) is amidoligase domain. S13 contributes to the CTP binding site. S13 is a binding site for UTP. 14-19 (GLGKGI) is a binding site for ATP. Y54 contacts L-glutamine. An ATP-binding site is contributed by D71. 2 residues coordinate Mg(2+): D71 and E141. Residues 148-150 (DIE), 188-193 (KTKPIQ), and K224 contribute to the CTP site. UTP is bound by residues 188 to 193 (KTKPIQ) and K224. In terms of domain architecture, Glutamine amidotransferase type-1 spans 292-532 (EISFVGKYIE…FIKAIIENNK (241 aa)). G354 is a binding site for L-glutamine. C381 functions as the Nucleophile; for glutamine hydrolysis in the catalytic mechanism. Residues 382–385 (LGMQ), E405, and R461 each bind L-glutamine. Residues H506 and E508 contribute to the active site.

The protein belongs to the CTP synthase family. Homotetramer.

The catalysed reaction is UTP + L-glutamine + ATP + H2O = CTP + L-glutamate + ADP + phosphate + 2 H(+). It catalyses the reaction L-glutamine + H2O = L-glutamate + NH4(+). It carries out the reaction UTP + NH4(+) + ATP = CTP + ADP + phosphate + 2 H(+). It participates in pyrimidine metabolism; CTP biosynthesis via de novo pathway; CTP from UDP: step 2/2. Its activity is regulated as follows. Allosterically activated by GTP, when glutamine is the substrate; GTP has no effect on the reaction when ammonia is the substrate. The allosteric effector GTP functions by stabilizing the protein conformation that binds the tetrahedral intermediate(s) formed during glutamine hydrolysis. Inhibited by the product CTP, via allosteric rather than competitive inhibition. Functionally, catalyzes the ATP-dependent amination of UTP to CTP with either L-glutamine or ammonia as the source of nitrogen. Regulates intracellular CTP levels through interactions with the four ribonucleotide triphosphates. This is CTP synthase from Mycoplasma capricolum subsp. capricolum (strain California kid / ATCC 27343 / NCTC 10154).